The sequence spans 309 residues: PI-PLC X domain-containing protein 1 (309 aa).

A PI-PLC X-box domain is found at 17-193 (HMWDIPLWNL…QVILSYDDES (177 aa)).

This Danio rerio (Zebrafish) protein is PI-PLC X domain-containing protein 1 (plcxd1).